The sequence spans 712 residues: Polyribonucleotide nucleotidyltransferase (712 aa).

2 residues coordinate Mg(2+): Asp-493 and Asp-499. Positions 560–622 (PRLTKLTIDP…RDAEAAIERI (63 aa)) constitute a KH domain. Residues 632–700 (GEDYVGTVKG…DDGKMRLTRK (69 aa)) form the S1 motif domain.

Belongs to the polyribonucleotide nucleotidyltransferase family. The cofactor is Mg(2+).

The protein resides in the cytoplasm. It carries out the reaction RNA(n+1) + phosphate = RNA(n) + a ribonucleoside 5'-diphosphate. Its function is as follows. Involved in mRNA degradation. Catalyzes the phosphorolysis of single-stranded polyribonucleotides processively in the 3'- to 5'-direction. The chain is Polyribonucleotide nucleotidyltransferase from Salinibacter ruber (strain DSM 13855 / M31).